The sequence spans 125 residues: Small ribosomal subunit protein uS12m (125 aa).

This sequence belongs to the universal ribosomal protein uS12 family.

It is found in the mitochondrion. Its function is as follows. Protein S12 is involved in the translation initiation step. This is Small ribosomal subunit protein uS12m (RPS12) from Helianthus annuus (Common sunflower).